The following is a 34-amino-acid chain: Photosystem II reaction center protein Psb30 (34 aa).

A helical membrane pass occupies residues 5–25 (VLAQLTVLAFVIAVGPITLIW).

The protein belongs to the Psb30/Ycf12 family. As to quaternary structure, PSII is composed of 1 copy each of membrane proteins PsbA, PsbB, PsbC, PsbD, PsbE, PsbF, PsbH, PsbI, PsbJ, PsbK, PsbL, PsbM, PsbT, PsbX, PsbY, PsbZ, Psb30/Ycf12, peripheral proteins of the oxygen-evolving complex and a large number of cofactors. It forms dimeric complexes.

It is found in the plastid. The protein resides in the chloroplast thylakoid membrane. Functionally, a core subunit of photosystem II (PSII), probably helps stabilize the reaction center. The chain is Photosystem II reaction center protein Psb30 from Cyanidioschyzon merolae (strain NIES-3377 / 10D) (Unicellular red alga).